Consider the following 260-residue polypeptide: Dolichol-phosphate mannosyltransferase subunit 1 (260 aa).

Residues 1-20 (MAAEEASRSSPRFRREPKGR) form a disordered region. Ala2 is modified (N-acetylalanine). Residue Ser9 is modified to Phosphoserine. Positions 32, 34, 36, 63, 65, 118, 119, 120, 147, 234, and 240 each coordinate GDP-alpha-D-mannose. A Mg(2+)-binding site is contributed by Asp120. Asp120 serves as a coordination point for Mn(2+).

The protein belongs to the glycosyltransferase 2 family. Component of the dolichol-phosphate mannose (DPM) synthase complex composed of DPM1, DPM2 and DPM3; within the complex, directly interacts with DPM3. This interaction may stabilize DPM1. It depends on Mg(2+) as a cofactor. The cofactor is Mn(2+). Ca(2+) is required as a cofactor.

It localises to the endoplasmic reticulum. The enzyme catalyses a di-trans,poly-cis-dolichyl phosphate + GDP-alpha-D-mannose = a di-trans,poly-cis-dolichyl beta-D-mannosyl phosphate + GDP. The protein operates within protein modification; protein glycosylation. Functionally, transfers mannose from GDP-mannose to dolichol monophosphate to form dolichol phosphate mannose (Dol-P-Man) which is the mannosyl donor in pathways leading to N-glycosylation, glycosyl phosphatidylinositol membrane anchoring, and O-mannosylation of proteins; catalytic subunit of the dolichol-phosphate mannose (DPM) synthase complex. In Bos taurus (Bovine), this protein is Dolichol-phosphate mannosyltransferase subunit 1 (DPM1).